The sequence spans 459 residues: tRNA modification GTPase MnmE (459 aa).

(6S)-5-formyl-5,6,7,8-tetrahydrofolate is bound by residues arginine 22, glutamate 85, and arginine 124. One can recognise a TrmE-type G domain in the interval 221-380 (GLSTVIVGKP…LEIQIRDLFF (160 aa)). Residue asparagine 231 participates in K(+) binding. Residues 231–236 (NVGKSS), 250–256 (TEVAGTT), and 275–278 (DTAG) each bind GTP. Position 235 (serine 235) interacts with Mg(2+). K(+) is bound by residues threonine 250, valine 252, and threonine 255. Threonine 256 contacts Mg(2+). Lysine 459 contacts (6S)-5-formyl-5,6,7,8-tetrahydrofolate.

The protein belongs to the TRAFAC class TrmE-Era-EngA-EngB-Septin-like GTPase superfamily. TrmE GTPase family. As to quaternary structure, homodimer. Heterotetramer of two MnmE and two MnmG subunits. It depends on K(+) as a cofactor.

It localises to the cytoplasm. Its function is as follows. Exhibits a very high intrinsic GTPase hydrolysis rate. Involved in the addition of a carboxymethylaminomethyl (cmnm) group at the wobble position (U34) of certain tRNAs, forming tRNA-cmnm(5)s(2)U34. The chain is tRNA modification GTPase MnmE from Staphylococcus aureus (strain Mu3 / ATCC 700698).